The following is a 183-amino-acid chain: Myelin-associated oligodendrocyte basic protein (183 aa).

Residues Thr-68–Trp-183 form a disordered region. Residues Arg-69–Gln-78 are compositionally biased toward basic residues. Residues Arg-79–Lys-96 show a composition bias toward low complexity. Repeat copies occupy residues Pro-97 to Gln-106, Pro-107 to Gln-116, Pro-117 to Gln-126, and Pro-127 to Gln-136. Residues Pro-97–Gln-136 are 4 X 10 AA tandem repeats of P-R-S-P-P-R-S-E-R-Q. Phosphoserine is present on residues Ser-99 and Ser-109. The segment covering Pro-101 to Val-143 has biased composition (basic and acidic residues). Positions Arg-151 to Pro-164 are enriched in low complexity.

Its subcellular location is the cytoplasm. It is found in the perinuclear region. Its function is as follows. May play a role in compacting or stabilizing the myelin sheath, possibly by binding the negatively charged acidic phospholipids of the cytoplasmic membrane. The polypeptide is Myelin-associated oligodendrocyte basic protein (MOBP) (Homo sapiens (Human)).